A 180-amino-acid chain; its full sequence is Crossover junction endodeoxyribonuclease RuvC (180 aa).

Residues aspartate 7, glutamate 66, and aspartate 138 contribute to the active site. Mg(2+) is bound by residues aspartate 7, glutamate 66, and aspartate 138.

The protein belongs to the RuvC family. As to quaternary structure, homodimer which binds Holliday junction (HJ) DNA. The HJ becomes 2-fold symmetrical on binding to RuvC with unstacked arms; it has a different conformation from HJ DNA in complex with RuvA. In the full resolvosome a probable DNA-RuvA(4)-RuvB(12)-RuvC(2) complex forms which resolves the HJ. Requires Mg(2+) as cofactor.

It is found in the cytoplasm. It catalyses the reaction Endonucleolytic cleavage at a junction such as a reciprocal single-stranded crossover between two homologous DNA duplexes (Holliday junction).. Its function is as follows. The RuvA-RuvB-RuvC complex processes Holliday junction (HJ) DNA during genetic recombination and DNA repair. Endonuclease that resolves HJ intermediates. Cleaves cruciform DNA by making single-stranded nicks across the HJ at symmetrical positions within the homologous arms, yielding a 5'-phosphate and a 3'-hydroxyl group; requires a central core of homology in the junction. The consensus cleavage sequence is 5'-(A/T)TT(C/G)-3'. Cleavage occurs on the 3'-side of the TT dinucleotide at the point of strand exchange. HJ branch migration catalyzed by RuvA-RuvB allows RuvC to scan DNA until it finds its consensus sequence, where it cleaves and resolves the cruciform DNA. This Burkholderia pseudomallei (strain 1710b) protein is Crossover junction endodeoxyribonuclease RuvC.